The sequence spans 464 residues: tRNA-2-methylthio-N(6)-dimethylallyladenosine synthase (464 aa).

A disordered region spans residues 1–24; that stretch reads MSDLVPLSRKPAPAAGGPAPSPAA. The span at 8 to 18 shows a compositional bias: low complexity; the sequence is SRKPAPAAGGP. Residues 27–142 enclose the MTTase N-terminal domain; it reads RKVYVHTFGC…LPEMVERARD (116 aa). Cysteine 36, cysteine 72, cysteine 105, cysteine 180, cysteine 184, and cysteine 187 together coordinate [4Fe-4S] cluster. The Radical SAM core domain occupies 166-398; it reads ARGRVTAFVT…LAAQRRIAGE (233 aa). One can recognise a TRAM domain in the interval 401 to 464; the sequence is AGELGKVVEV…GGSSLSGTLA (64 aa).

This sequence belongs to the methylthiotransferase family. MiaB subfamily. Monomer. [4Fe-4S] cluster serves as cofactor.

It localises to the cytoplasm. The catalysed reaction is N(6)-dimethylallyladenosine(37) in tRNA + (sulfur carrier)-SH + AH2 + 2 S-adenosyl-L-methionine = 2-methylsulfanyl-N(6)-dimethylallyladenosine(37) in tRNA + (sulfur carrier)-H + 5'-deoxyadenosine + L-methionine + A + S-adenosyl-L-homocysteine + 2 H(+). Its function is as follows. Catalyzes the methylthiolation of N6-(dimethylallyl)adenosine (i(6)A), leading to the formation of 2-methylthio-N6-(dimethylallyl)adenosine (ms(2)i(6)A) at position 37 in tRNAs that read codons beginning with uridine. In Anaeromyxobacter sp. (strain K), this protein is tRNA-2-methylthio-N(6)-dimethylallyladenosine synthase.